The sequence spans 164 residues: MKDFESLKFQINELVNKELEVLNLKVYQINNLKEFENDMIQILVEDSLQANKPLDFDILIKANDLVSNKIDQLIKTKDKYLLEISSSGIEKQIRSQEELLKALEQWVYVQLNNEIKKVKEFEGYVTKYNDQTNTFTFSFFIKGQKKNLDVKFDDIKFIRYAVRF.

It belongs to the RimP family.

Its subcellular location is the cytoplasm. In terms of biological role, required for maturation of 30S ribosomal subunits. This chain is Ribosome maturation factor RimP, found in Mycoplasma mycoides subsp. mycoides SC (strain CCUG 32753 / NCTC 10114 / PG1).